The following is a 115-amino-acid chain: Con-Ins T1A (115 aa).

The N-terminal stretch at 1-24 (MTTSFYFLLMALGLLLYVCQSSFG) is a signal peptide. The propeptide occupies 25-29 (NQHTR). Proline 34 carries the 4-hydroxyproline; partial modification. 3 disulfide bridges follow: cysteine 38-cysteine 101, cysteine 50-cysteine 114, and cysteine 100-cysteine 105. The residue at position 41 (glutamate 41) is a 4-carboxyglutamate. A propeptide spans 53 to 94 (KRNDAGKKRGRASPLWQRGGSLSMLKARAKRNEAFHLQRAHR) (c peptide). Glutamate 98 is modified (4-carboxyglutamate). Proline 104 is modified (4-hydroxyproline; partial). Glutamate 109 carries the post-translational modification 4-carboxyglutamate; partial. Residue cysteine 114 is modified to Cysteine amide.

It belongs to the insulin family. In terms of assembly, heterodimer of A and B chains; disulfide-linked. In terms of tissue distribution, expressed by the venom gland.

It localises to the secreted. Its function is as follows. This venom insulin, from a fish-hunting cone snail, facilitates prey capture by rapidly inducing hypoglycemic shock. It is one of the smallest known insulin found in nature and lacks the C-terminal segment of the B chain that, in human insulin, mediates engagement of the insulin receptor (INSR) and assembly of the hormone's hexameric storage form. Despite lacking this segment, it both binds and activates human insulin receptor (long isoform (HIR-B)) with a high potency (EC(50)=12.0 nM). In vivo, intraperitoneal injection of this peptide into zebrafish lowers blood glucose with a lower potency than human insulin. In addition, when applied to water, this peptide reduces overall locomotor activity of zebrafish larvae, observed as a significant decrease in the percentage of time spent swimming and movement frequency. When tested on a mouse model of diabetes, this insulin also lowers blood glucose with a 10-fold lower potency than human insulin. This is Con-Ins T1A from Conus tulipa (Fish-hunting cone snail).